We begin with the raw amino-acid sequence, 142 residues long: Large ribosomal subunit protein uL11 (142 aa).

Belongs to the universal ribosomal protein uL11 family. In terms of assembly, part of the ribosomal stalk of the 50S ribosomal subunit. Interacts with L10 and the large rRNA to form the base of the stalk. L10 forms an elongated spine to which L12 dimers bind in a sequential fashion forming a multimeric L10(L12)X complex. One or more lysine residues are methylated.

Functionally, forms part of the ribosomal stalk which helps the ribosome interact with GTP-bound translation factors. The sequence is that of Large ribosomal subunit protein uL11 from Enterobacter sp. (strain 638).